The following is a 444-amino-acid chain: Trigger factor (444 aa).

The 86-residue stretch at 160-245 (DMQVTFDFEG…VKQVEKPKLP (86 aa)) folds into the PPIase FKBP-type domain.

This sequence belongs to the FKBP-type PPIase family. Tig subfamily.

It localises to the cytoplasm. It carries out the reaction [protein]-peptidylproline (omega=180) = [protein]-peptidylproline (omega=0). Involved in protein export. Acts as a chaperone by maintaining the newly synthesized protein in an open conformation. Functions as a peptidyl-prolyl cis-trans isomerase. In Acinetobacter baumannii (strain AB0057), this protein is Trigger factor.